The sequence spans 246 residues: Orotidine 5'-phosphate decarboxylase (246 aa).

Substrate is bound by residues Asp-22, Lys-44, 71–80 (DLKYHDIPHT), Thr-130, Arg-191, Gln-201, Gly-221, and Arg-222. Lys-73 acts as the Proton donor in catalysis.

It belongs to the OMP decarboxylase family. Type 1 subfamily. In terms of assembly, homodimer.

The catalysed reaction is orotidine 5'-phosphate + H(+) = UMP + CO2. Its pathway is pyrimidine metabolism; UMP biosynthesis via de novo pathway; UMP from orotate: step 2/2. Functionally, catalyzes the decarboxylation of orotidine 5'-monophosphate (OMP) to uridine 5'-monophosphate (UMP). This Neisseria meningitidis serogroup A / serotype 4A (strain DSM 15465 / Z2491) protein is Orotidine 5'-phosphate decarboxylase.